The following is a 564-amino-acid chain: Homeobox protein unc-62 (564 aa).

Disordered regions lie at residues 40–59 (NEQF…ADPA), 216–270 (ERAS…VMGG), 293–313 (SSSS…LHST), 328–397 (PSTC…KVPK), and 455–503 (IDQN…PSSL). The region spanning 133-218 (SSDVCSSASF…PLDIVGDERA (86 aa)) is the MEIS N-terminal domain. A compositionally biased stretch (low complexity) spans 219 to 230 (SSSQPPMSPGSM). 2 stretches are compositionally biased toward polar residues: residues 328–344 (PSTC…TPLS) and 381–390 (LSDSANGSQN). The homeobox; TALE-type DNA-binding region spans 392–454 (KRKVPKVFSK…NARRRIVQPM (63 aa)). 2 stretches are compositionally biased toward polar residues: residues 455-469 (IDQN…QMNV) and 494-503 (ANYSPDPSSL).

This sequence belongs to the TALE/MEIS homeobox family. Forms a heterodimer with homeobox ceh-60.

The protein resides in the nucleus. Its function is as follows. Acts redundantly with ceh-20 and ceh-40 to perform overlapping roles during embryogenesis. Required for postembryonic development of the ectoderm, including the Q, V and P cell lineages, playing a crucial role in ensuring that these cells and their descendants undergo their invariant patterns of cell division, migration, fusion and morphogenesis. Has a role in the mig-13 pathway to promote anterior migration of neuroblasts in the Q lineage. Required for multiple roles in regulating vulva development. Associates with homeobox ceh-60 to regulate gene expression, including repression of genes involved in innate immunity and activation of genes involved in vitellogenesis. Involved in lipid homeostasis, contributing to the formation of the cuticle. The polypeptide is Homeobox protein unc-62 (unc-62) (Caenorhabditis elegans).